The following is a 145-amino-acid chain: Ribosomal RNA large subunit methyltransferase H (145 aa).

S-adenosyl-L-methionine is bound by residues Leu62, Gly94, and 113–118 (LGQLTL).

The protein belongs to the RNA methyltransferase RlmH family. Homodimer.

It localises to the cytoplasm. It catalyses the reaction pseudouridine(1915) in 23S rRNA + S-adenosyl-L-methionine = N(3)-methylpseudouridine(1915) in 23S rRNA + S-adenosyl-L-homocysteine + H(+). Its function is as follows. Specifically methylates the pseudouridine at position 1915 (m3Psi1915) in 23S rRNA. The protein is Ribosomal RNA large subunit methyltransferase H of Deinococcus deserti (strain DSM 17065 / CIP 109153 / LMG 22923 / VCD115).